The sequence spans 134 residues: Postmeiotic segregation increased 2-like protein 5 (134 aa).

The protein belongs to the DNA mismatch repair MutL/HexB family.

The sequence is that of Postmeiotic segregation increased 2-like protein 5 (PMS2P5) from Homo sapiens (Human).